The sequence spans 481 residues: MKEPLIFDLSRPGRKGYSLSPCDVPEVPLESIIPASLLRKEAVELPEVAENEVVRHFVRLSNLNYHVDKNMYPLGSCTMKYNPKVNDYTCDLSGFSALHPLQPTSTTQGALQLMYELSNMLAEIAGMAGVSLQPAAGAHGELTGILLIKKYHEVRGDKRHKLLVVDSAHGTNPASAALAGYETISVKSNGDGRTDLEDLRSKLDGDVAALMLTNPNTIGLFEKEIVQIAEMVHANGSLLYMDGANMNALLGITRPGDMGFDVMHYNLHKTFAAPHGGGGPGSGPVGVNEKLLPYLPAPLVVKEGDTYRLTSGGDDSIGRMMNFYGNFAVLVRAYTYIRMLGAEGLRRVSENAIINANYLLSKLLERYELPYPKPVMHEFCLSGDKQKKAHGVKTLDIAKRLLDYGFHAPTIYFPLIVSEALMIEPTETESKETLDIFADALLAIAREAEENPDVVKMAPSTTAVKRLDEATASRQLTICCM.

K269 carries the N6-(pyridoxal phosphate)lysine modification.

Belongs to the GcvP family. C-terminal subunit subfamily. The glycine cleavage system is composed of four proteins: P, T, L and H. In this organism, the P 'protein' is a heterodimer of two subunits. The cofactor is pyridoxal 5'-phosphate.

It carries out the reaction N(6)-[(R)-lipoyl]-L-lysyl-[glycine-cleavage complex H protein] + glycine + H(+) = N(6)-[(R)-S(8)-aminomethyldihydrolipoyl]-L-lysyl-[glycine-cleavage complex H protein] + CO2. Functionally, the glycine cleavage system catalyzes the degradation of glycine. The P protein binds the alpha-amino group of glycine through its pyridoxal phosphate cofactor; CO(2) is released and the remaining methylamine moiety is then transferred to the lipoamide cofactor of the H protein. The chain is Probable glycine dehydrogenase (decarboxylating) subunit 2 from Chlorobium chlorochromatii (strain CaD3).